Here is a 959-residue protein sequence, read N- to C-terminus: Isoleucine--tRNA ligase (959 aa).

Residues 60–70 (PYANGSLHMGH) carry the 'HIGH' region motif. Glutamate 569 serves as a coordination point for L-isoleucyl-5'-AMP. A 'KMSKS' region motif is present at residues 610-614 (KMSKS). Lysine 613 contributes to the ATP binding site. Cysteine 928, cysteine 931, cysteine 948, and cysteine 951 together coordinate Zn(2+).

The protein belongs to the class-I aminoacyl-tRNA synthetase family. IleS type 1 subfamily. Monomer. Zn(2+) is required as a cofactor.

Its subcellular location is the cytoplasm. It carries out the reaction tRNA(Ile) + L-isoleucine + ATP = L-isoleucyl-tRNA(Ile) + AMP + diphosphate. In terms of biological role, catalyzes the attachment of isoleucine to tRNA(Ile). As IleRS can inadvertently accommodate and process structurally similar amino acids such as valine, to avoid such errors it has two additional distinct tRNA(Ile)-dependent editing activities. One activity is designated as 'pretransfer' editing and involves the hydrolysis of activated Val-AMP. The other activity is designated 'posttransfer' editing and involves deacylation of mischarged Val-tRNA(Ile). In Gloeothece citriformis (strain PCC 7424) (Cyanothece sp. (strain PCC 7424)), this protein is Isoleucine--tRNA ligase.